Consider the following 160-residue polypeptide: uncharacterized protein (160 aa).

The RING-type zinc finger occupies 8–46 (CAVCLDFFVEPCIIECGHSYCRFCIESHLNINEKCPLCR).

This is an uncharacterized protein from Caenorhabditis elegans.